The sequence spans 199 residues: uncharacterized protein (199 aa).

Helical transmembrane passes span 22–44, 65–87, and 91–108; these read VVVV…YLFL, TGFI…HLAL, and HTIT…FFFW.

This sequence belongs to the ycf1 family.

It is found in the mitochondrion membrane. This is an uncharacterized protein from Arabidopsis thaliana (Mouse-ear cress).